Consider the following 243-residue polypeptide: Adenylate dimethylallyltransferase (243 aa).

The protein belongs to the isopentenyl transferase family.

The enzyme catalyses dimethylallyl diphosphate + AMP = N(6)-(dimethylallyl)adenosine 5'-phosphate + diphosphate. Functionally, transfers dimethylallyl groups to AMP as part of the biosynthesis of cytokinin phytohormones. This Rhizobium rhizogenes (Agrobacterium rhizogenes) protein is Adenylate dimethylallyltransferase (tzs).